The following is a 200-amino-acid chain: Mpv17-like protein 2 (200 aa).

The next 3 helical transmembrane spans lie at 24–40 (ALLLTNTLGCGVLMAAG), 63–83 (ASMFAVGCSMGPFLHFWYLWL), and 102–122 (VLVDQTVASPILGVWYFLGLG).

Belongs to the peroxisomal membrane protein PXMP2/4 family. Interacts with the large mitochondrial ribosomal subunit.

Its subcellular location is the membrane. The protein resides in the mitochondrion inner membrane. Its function is as follows. Required for the assembly and stability of the mitochondrial ribosome. Is a positive regulator of mitochondrial protein synthesis. The chain is Mpv17-like protein 2 (Mpv17l2) from Mus musculus (Mouse).